The following is a 222-amino-acid chain: Charged multivesicular body protein 3 (222 aa).

Residue Gly-2 is the site of N-myristoyl glycine attachment. Residues 2-113 (GLFGKTQEKP…LQKSTEVMKA (112 aa)) are intramolecular interaction with C-terminus. A coiled-coil region spans residues 22–54 (KIRKEMRVVDRQIRDIQREEEKVKRSVKDAAKK). Important for autoinhibitory function stretches follow at residues 59 to 64 (VCVVLA) and 168 to 169 (IL). Positions 149–222 (ESMDDQEEME…MQSRLATLRS (74 aa)) form a coiled coil. Residues 151-220 (MDDQEEMEEA…EAMQSRLATL (70 aa)) are intramolecular interaction with N-terminus. The tract at residues 151 to 222 (MDDQEEMEEA…MQSRLATLRS (72 aa)) is interaction with VPS4A. A Glycyl lysine isopeptide (Lys-Gly) (interchain with G-Cter in ubiquitin) cross-link involves residue Lys-179. The disordered stretch occupies residues 180–222 (APSKVTDALPEPEPSGAMAASDEEEEEEEALEAMQSRLATLRS). Interaction with STAMBP stretches follow at residues 196-222 (AMAASDEEEEEEEALEAMQSRLATLRS), 203-207 (EEEEE), and 221-222 (RS). The residue at position 200 (Ser-200) is a Phosphoserine. Residues 200-210 (SDEEEEEEEAL) show a composition bias toward acidic residues. The MIT-interacting motif motif lies at 201-211 (DEEEEEEEALE).

The protein belongs to the SNF7 family. In terms of assembly, probable core component of the endosomal sorting required for transport complex III (ESCRT-III). ESCRT-III components are thought to multimerize to form a flat lattice on the perimeter membrane of the endosome. Several assembly forms of ESCRT-III may exist that interact and act sequentially. Forms a metastable monomer in solution; its core structure (without part of the putative autoinhibitory C-terminal acidic region) oligomerizes into a flat lattice via two different dimerization interfaces. In vitro, heteromerizes with CHMP2A (but not CHMP4) to form helical tubular structures that expose membrane-interacting sites on the outside whereas VPS4B can associate on the inside of the tubule. May interact with IGFBP7; the relevance of such interaction however remains unclear. Interacts with CHMP2A. Interacts with CHMP4A; the interaction requires the release of CHMP4A autoinhibition. Interacts with VPS4A. Interacts with STAMBP; the interaction appears to relieve the autoinhibition of CHMP3. Interacts with VTA1.

Its subcellular location is the cytoplasm. It is found in the cytosol. The protein localises to the membrane. It localises to the endosome. The protein resides in the late endosome membrane. Its function is as follows. Probable core component of the endosomal sorting required for transport complex III (ESCRT-III) which is involved in multivesicular bodies (MVBs) formation and sorting of endosomal cargo proteins into MVBs. MVBs contain intraluminal vesicles (ILVs) that are generated by invagination and scission from the limiting membrane of the endosome and mostly are delivered to lysosomes enabling degradation of membrane proteins, such as stimulated growth factor receptors, lysosomal enzymes and lipids. The MVB pathway appears to require the sequential function of ESCRT-O, -I,-II and -III complexes. ESCRT-III proteins mostly dissociate from the invaginating membrane before the ILV is released. The ESCRT machinery also functions in topologically equivalent membrane fission events, such as the terminal stages of cytokinesis and the budding of enveloped viruses (lentiviruses). ESCRT-III proteins are believed to mediate the necessary vesicle extrusion and/or membrane fission activities, possibly in conjunction with the AAA ATPase VPS4. Selectively binds to phosphatidylinositol 3,5-bisphosphate PtdIns(3,5)P2 and PtdIns(3,4)P2 in preference to other phosphoinositides tested. Involved in late stages of cytokinesis. Plays a role in endosomal sorting/trafficking of EGF receptor. This chain is Charged multivesicular body protein 3 (CHMP3), found in Macaca fascicularis (Crab-eating macaque).